Here is a 658-residue protein sequence, read N- to C-terminus: NADH-ubiquinone oxidoreductase chain 5 (658 aa).

The next 17 helical transmembrane spans lie at 4–23 (TLIVLPLLGSISSGFFGRKI), 30–52 (IITCSSVILTTLLALLAFIEVGI), 81–103 (LTVSMLIPVLIVSSLVHIYSISY), 112–129 (RFFSYLSLFTFMMIILVT), 133–155 (YLLMFVGWEGVGICSYLLINFWF), 168–190 (LLTNRVGDCFLTIGIFAMLWSFG), 200–222 (LAPYYNENIITMIGICLVIGATA), 243–262 (VSALIHAATMVTAGVYLLMR), 272–294 (TVLIICLWLGAITTVFSSLIGLF), 301–319 (VIAYSTMSQLGMMVIGIGL), 329–351 (LVNHAFYKALLFLGAGAVIHSVA), 364–386 (PFLPLTYSVMLIASLSLVAVPFM), 409–431 (IVYFIATIGAMFTTLYSAKVLYL), 452–471 (LFLNIPLIILAVFSIFFGFL), 505–527 (VPVLFKLLPFFFTISLSILSILY), 607–629 (LSTGVVTTYALYILMGLMFYIST), and 639–656 (LLILIIFSLFVILNNKLL).

Belongs to the complex I subunit 5 family.

The protein localises to the mitochondrion inner membrane. It carries out the reaction a ubiquinone + NADH + 5 H(+)(in) = a ubiquinol + NAD(+) + 4 H(+)(out). In terms of biological role, core subunit of the mitochondrial membrane respiratory chain NADH dehydrogenase (Complex I) that is believed to belong to the minimal assembly required for catalysis. Complex I functions in the transfer of electrons from NADH to the respiratory chain. The immediate electron acceptor for the enzyme is believed to be ubiquinone. The polypeptide is NADH-ubiquinone oxidoreductase chain 5 (nad5) (Talaromyces marneffei (Penicillium marneffei)).